The following is a 424-amino-acid chain: Calreticulin-3 (424 aa).

The first 28 residues, 1 to 28 (MGLPQNKLSFFCFFFLVSVLTLAPLAFS), serve as a signal peptide directing secretion. N-linked (GlcNAc...) asparagine glycosylation is present at N97. A disulfide bond links C114 and C146. An alpha-D-glucoside-binding residues include Y118, K120, Y137, and D144. Tandem repeats lie at residues 200 to 211 (REFGSMYTDWDI), 219 to 230 (VKNAKKPEDWDD), 236 to 247 (DPNDVKPEGFDS), 254 to 265 (DRKAKEPEDWDE), 269 to 279 (GLWEPPKIPNS), 283 to 293 (GPWKAKRIKNP), and 297 to 307 (GKWKNPWIDNP). A 4 X approximate repeats region spans residues 200 to 265 (REFGSMYTDW…KAKEPEDWDE (66 aa)). Residues 228–237 (WDDREYIDDP) show a composition bias toward acidic residues. A disordered region spans residues 228–275 (WDDREYIDDPNDVKPEGFDSIPREIPDRKAKEPEDWDEEENGLWEPPK). The segment covering 238-260 (NDVKPEGFDSIPREIPDRKAKEP) has biased composition (basic and acidic residues). The interval 269-307 (GLWEPPKIPNSAYKGPWKAKRIKNPNYKGKWKNPWIDNP) is 3 X approximate repeats. E327 provides a ligand contact to an alpha-D-glucoside. The segment covering 368–401 (FAEAEKERKAREDEEARIAREEGERRRKERDHRY) has biased composition (basic and acidic residues). The interval 368-424 (FAEAEKERKAREDEEARIAREEGERRRKERDHRYGDRRRRYKRPNPRDYMDDYHDEL) is disordered. Basic residues predominate over residues 402–411 (GDRRRRYKRP). Residues 412 to 424 (NPRDYMDDYHDEL) are compositionally biased toward basic and acidic residues. The Prevents secretion from ER signature appears at 421 to 424 (HDEL).

Belongs to the calreticulin family.

The protein localises to the endoplasmic reticulum lumen. Molecular calcium-binding chaperone promoting folding, oligomeric assembly and quality control in the ER via the calreticulin/calnexin cycle. This lectin may interact transiently with almost all of the monoglucosylated glycoproteins that are synthesized in the ER. Required for elongation factor Tu receptor (EFR) accumulation and for EFR, but not flagellin-sensing 2 (FLS2) signaling. This chain is Calreticulin-3 (CRT3), found in Arabidopsis thaliana (Mouse-ear cress).